Consider the following 503-residue polypeptide: Nondiscriminating glutamyl-tRNA synthetase EARS2, mitochondrial (503 aa).

The N-terminal 22 residues, 1–22 (MKILRGVSRQMCTSRPEVRVRF), are a transit peptide targeting the mitochondrion. 21 to 23 (RFA) is an L-glutamate binding site. Positions 26–34 (PTGFLHLGG) match the 'HIGH' region motif. His-31 contacts ATP. Residues Glu-57, 209–213 (YHLAS), and Arg-227 each bind L-glutamate. Residues Glu-230 and 265 to 269 (KLSKR) each bind ATP. Positions 265–269 (KLSKR) match the 'KMSKS' region motif.

The protein belongs to the class-I aminoacyl-tRNA synthetase family. Glutamate--tRNA ligase type 1 subfamily.

It localises to the mitochondrion matrix. The enzyme catalyses tRNA(Glx) + L-glutamate + ATP = L-glutamyl-tRNA(Glx) + AMP + diphosphate. It catalyses the reaction tRNA(Glu) + L-glutamate + ATP = L-glutamyl-tRNA(Glu) + AMP + diphosphate. It carries out the reaction tRNA(Gln) + L-glutamate + ATP = L-glutamyl-tRNA(Gln) + AMP + diphosphate. In terms of biological role, non-discriminating glutamyl-tRNA synthetase that catalyzes aminoacylation of both mitochondrial tRNA(Glu) and tRNA(Gln) and participates in RNA aminoacylation for mitochondrial protein translation. Attachs glutamate to tRNA(Glu) or tRNA(Gln) in a two-step reaction: glutamate is first activated by ATP to form Glu-AMP and then transferred to the acceptor end of tRNA(Glu) or tRNA(Gln). In Danio rerio (Zebrafish), this protein is Nondiscriminating glutamyl-tRNA synthetase EARS2, mitochondrial.